A 354-amino-acid chain; its full sequence is Probable calcium-binding protein CML50 (354 aa).

Low complexity-rich tracts occupy residues 1-10 (MSGYPPTSQG) and 28-71 (YSSG…SSYG). Positions 1–159 (MSGYPPTSQG…PASSGHGGGY (159 aa)) are disordered. Positions 72-81 (APPPSAPYAP) are enriched in pro residues. A compositionally biased stretch (low complexity) spans 106-117 (GSSDYGSYGAGP). EF-hand domains lie at 183–218 (GTDP…YQQR) and 249–284 (YSLQ…LGFS). Ca(2+) contacts are provided by Asp-196, Asp-198, Ser-200, Glu-207, Asp-262, Asp-264, Ser-266, Arg-268, and Glu-273.

Potential calcium sensor. The sequence is that of Probable calcium-binding protein CML50 (CML50) from Arabidopsis thaliana (Mouse-ear cress).